Consider the following 79-residue polypeptide: Keratin-associated protein 21-1 (79 aa).

In terms of assembly, interacts with hair keratins.

Functionally, in the hair cortex, hair keratin intermediate filaments are embedded in an interfilamentous matrix, consisting of hair keratin-associated proteins (KRTAP), which are essential for the formation of a rigid and resistant hair shaft through their extensive disulfide bond cross-linking with abundant cysteine residues of hair keratins. The matrix proteins include the high-sulfur and high-glycine-tyrosine keratins. The polypeptide is Keratin-associated protein 21-1 (KRTAP21-1) (Homo sapiens (Human)).